The chain runs to 176 residues: Adenylyl-sulfate kinase (176 aa).

Residue 12–19 (GLSGAGKT) coordinates ATP. Residue Ser-86 is the Phosphoserine intermediate of the active site.

The protein belongs to the APS kinase family.

It carries out the reaction adenosine 5'-phosphosulfate + ATP = 3'-phosphoadenylyl sulfate + ADP + H(+). It functions in the pathway sulfur metabolism; hydrogen sulfide biosynthesis; sulfite from sulfate: step 2/3. In terms of biological role, catalyzes the synthesis of activated sulfate. The chain is Adenylyl-sulfate kinase from Synechococcus sp. (strain JA-3-3Ab) (Cyanobacteria bacterium Yellowstone A-Prime).